Reading from the N-terminus, the 528-residue chain is Protein DA1-related 2 (528 aa).

The disordered stretch occupies residues 60 to 108 (SNGGGSGAHTNHHPPQFQEDENMVFPLPPSSLDDRSRGARDKEELDRSI). Positions 91 to 106 (LDDRSRGARDKEELDR) are enriched in basic and acidic residues. The UIM 1 domain maps to 99-118 (RDKEELDRSISLSLADNTKR). Residues 127 to 148 (DNNRDFPRPFHGGLNPSSFIPP) form the UIM 2; degenerate domain. The region spanning 160 to 220 (RICGGCNSDI…KLCFKELTHP (61 aa)) is the LIM zinc-binding domain. Residues 447 to 474 (DPSTRNLPSTSSVATSSSSSFSNKKGGK) are disordered. Low complexity predominate over residues 455–470 (STSSVATSSSSSFSNK).

As to quaternary structure, interacts with ubiquitin, TCP14 and TCP15. Polyubiquitinated by DA2. Expressed in the vasculature of leaves, inflorescence stems, flowers, hypocotyls, and primary and lateral roots. In roots, expressed in phloem companion cells.

Its function is as follows. Acts redundantly with DA1 and DAR1 to regulate endoreduplication during leaf development. Together with DA1 and DAR1, modulates the protein stability of the transcription factors TCP14 and TCP15, which repress endoreduplication by directly regulating the expression of cell-cycle genes. Involved in root phloem development. Is an essential component of early phloem development, long-distance delivery of phloem content, and proper maintenance of root system architecture. Involved in the control of root meristem size. Functions genetically downstream of cytokinin and IAA3 to maintain normal auxin distribution by influencing polar auxin transport. Acts through the PLETHORA pathway, upstream of PLT1 and PLT2 to influence root stem cell niche activity and thus control root meristem size. This Arabidopsis thaliana (Mouse-ear cress) protein is Protein DA1-related 2.